A 1501-amino-acid chain; its full sequence is Multidrug resistance protein CDR1 (1501 aa).

A disordered region spans residues 1–30; sequence MSDSKMSSQDESKLEKAISQDSSSENHSIN. The Cytoplasmic portion of the chain corresponds to 1-513; it reads MSDSKMSSQD…NFLRMKGDPS (513 aa). Over residues 8-18 the composition is skewed to basic and acidic residues; the sequence is SQDESKLEKAI. The ABC transporter 1 domain occupies 150–404; it reads LATEGFRHFQ…FEKMGWKCPQ (255 aa). A helical membrane pass occupies residues 514 to 534; that stretch reads IPIFSVFGQLVMGLILSSVFY. Residue Asn535 is glycosylated (N-linked (GlcNAc...) asparagine). The next 4 helical transmembrane spans lie at 549 to 569, 598 to 618, 623 to 643, and 655 to 675; these read AMFF…MSLF, LPVK…MVNF, GRFF…SHLF, and GAMT…GFVI. Asn724 is a glycosylation site (N-linked (GlcNAc...) asparagine). A helical membrane pass occupies residues 765–785; sequence LGITIGFAVFFLAIYIALTEF. At 786 to 1195 the chain is on the cytoplasmic side; sequence NKGAMQKGEI…TIVQDWRSPG (410 aa). Positions 859-1103 constitute an ABC transporter 2 domain; that stretch reads FFWRDLTYQV…MINYFEKYGA (245 aa). 895–902 is an ATP binding site; it reads GASGAGKT. Helical transmembrane passes span 1196-1216, 1230-1250, 1281-1301, 1315-1335, 1356-1376, and 1467-1487; these read YIYS…FSFF, FSVF…LPYF, IPYQ…PLGL, GVLM…MGQL, MCLN…FWIF, and FGIF…FYWL.

It belongs to the ABC transporter superfamily. ABCG family. PDR (TC 3.A.1.205) subfamily.

The protein localises to the membrane. Its function is as follows. Transporter, whose physiological function is not yet established. Confers resistance to the chemical cycloheximide. The sequence is that of Multidrug resistance protein CDR1 (CDR1) from Candida albicans (Yeast).